Reading from the N-terminus, the 153-residue chain is Gamma-glutamylaminecyclotransferase (153 aa).

7 to 10 (YGTL) contributes to the substrate binding site. The active-site Proton acceptor is E82. The disordered stretch occupies residues 130-153 (QLPHHDSYDSEGPHGLRYNPRENR). The span at 132–153 (PHHDSYDSEGPHGLRYNPRENR) shows a compositional bias: basic and acidic residues.

The protein belongs to the gamma-glutamylcyclotransferase family. In terms of assembly, monomer.

It carries out the reaction epsilon-(gamma-L-glutamyl)-L-lysine = 5-oxo-L-proline + L-lysine. In terms of biological role, contributes to degradation of proteins cross-linked by transglutaminases by degrading the cross-link between a lysine and a glutamic acid residue. Catalyzes the formation of 5-oxo-L-proline from L-gamma-glutamyl-L-epsilon-lysine. Inactive with L-gamma-glutamyl-alpha-amino acid substrates such as L-gamma-glutamyl-L-alpha-cysteine and L-gamma-glutamyl-L-alpha-alanine. The chain is Gamma-glutamylaminecyclotransferase (GGACT) from Homo sapiens (Human).